The chain runs to 340 residues: Extracellular matrix protein-binding protein emp (340 aa).

The signal sequence occupies residues 1–26 (MKKKLLVLTMSTLFATQLINSNHANA).

The protein resides in the cell surface. Functionally, adhesin that binds to the host cell extracellular matrix proteins fibronectin, fibrinogen, collagen, and vitronectin. The sequence is that of Extracellular matrix protein-binding protein emp (emp) from Staphylococcus aureus.